A 763-amino-acid polypeptide reads, in one-letter code: Amine oxidase [copper-containing] 3 (763 aa).

The Cytoplasmic portion of the chain corresponds to 1–5 (MNQKT). Residues 6-26 (ILVLLILAVITIFALVCVLLV) form a helical; Signal-anchor for type II membrane protein membrane-spanning segment. At 27 to 763 (GRGGDGGEPS…AFSHGGFSHN (737 aa)) the chain is on the extracellular side. A glycan (O-linked (GalNAc...) serine) is linked at Ser43. Residue Asn137 is glycosylated (N-linked (GlcNAc...) asparagine). The cysteines at positions 198 and 199 are disulfide-linked. O-linked (GalNAc...) threonine glycosylation is present at Thr212. Residues Asn232 and Asn294 are each glycosylated (N-linked (GlcNAc...) asparagine). The active-site Proton acceptor is Asp386. Cys404 and Cys430 are disulfide-bonded. Tyr471 acts as the Schiff-base intermediate with substrate; via topaquinone in catalysis. Tyr471 bears the 2',4',5'-topaquinone mark. Cu(2+) is bound by residues His520 and His522. Asp529, Leu530, Asp531, and Glu572 together coordinate Ca(2+). Asn592 carries an N-linked (GlcNAc...) (complex) asparagine glycan. N-linked (GlcNAc...) asparagine glycosylation occurs at Asn618. Residues Glu641, Phe663, and Asn665 each coordinate Ca(2+). N-linked (GlcNAc...) asparagine glycosylation is present at Asn666. Glu667, Asp673, and Leu674 together coordinate Ca(2+). Thr679 is a glycosylation site (O-linked (GlcNAc) threonine). His684 lines the Cu(2+) pocket. Cys734 and Cys741 form a disulfide bridge.

It belongs to the copper/topaquinone oxidase family. In terms of assembly, homodimer; disulfide-linked. Can heterodimerize with isoform 2 leading to reduced surface expression. Probably forms heterodimers with AOC2. Requires Cu(2+) as cofactor. It depends on Ca(2+) as a cofactor. L-topaquinone is required as a cofactor. Post-translationally, topaquinone (TPQ) is generated by copper-dependent autoxidation of a specific tyrosyl residue. In terms of processing, N- and O-glycosylated. Strongly expressed on the high endothelial venules of peripheral lymph nodes and on hepatic endothelia. Also highly expressed in appendix, lung and small intestine. Expressed also in adipose tissue, in bone marrow, colon, heart, kidney, ovary, pancreas, placenta, prostate, skeletal muscle, spleen and testis. Isoform 2 seems to be the predominant transcript in fetal kidneys, fetal cartilage and fetal tonsils. The highest relative expression of isoform 2 occurs in skeletal muscle, heart, pancreas, kidney, and lung.

It is found in the cell membrane. It carries out the reaction methylamine + O2 + H2O = formaldehyde + H2O2 + NH4(+). It catalyses the reaction benzylamine + O2 + H2O = benzaldehyde + H2O2 + NH4(+). The enzyme catalyses 2-phenylethylamine + O2 + H2O = 2-phenylacetaldehyde + H2O2 + NH4(+). Functionally, catalyzes the oxidative deamination of primary amines to the corresponding aldehydes with the concomitant production of hydrogen peroxide and ammonia. Has a preference for the primary monoamines methylamine and benzylamine. Could also act on 2-phenylethylamine but much less efficiently. At endothelial cells surface can also function as a cell adhesion protein that participates in lymphocyte extravasation and recirculation by mediating the binding of lymphocytes to peripheral lymph node vascular endothelial cells in an L-selectin-independent fashion. In terms of biological role, has no semicarbazide-sensitive amine oxidase (SSAO) activity. In Homo sapiens (Human), this protein is Amine oxidase [copper-containing] 3.